The sequence spans 171 residues: uncharacterized protein (171 aa).

This is an uncharacterized protein from Ureaplasma parvum serovar 3 (strain ATCC 700970).